Consider the following 236-residue polypeptide: Purine nucleoside phosphorylase DeoD-type (236 aa).

A purine D-ribonucleoside is bound at residue His-4. Phosphate contacts are provided by residues Gly-20, Arg-24, Arg-43, and 87 to 90; that span reads RVGT. A purine D-ribonucleoside is bound by residues 179–181 and 203–204; these read EME and SD. The active-site Proton donor is Asp-204.

Belongs to the PNP/UDP phosphorylase family. Homohexamer; trimer of homodimers.

It catalyses the reaction a purine D-ribonucleoside + phosphate = a purine nucleobase + alpha-D-ribose 1-phosphate. The catalysed reaction is a purine 2'-deoxy-D-ribonucleoside + phosphate = a purine nucleobase + 2-deoxy-alpha-D-ribose 1-phosphate. In terms of biological role, catalyzes the reversible phosphorolytic breakdown of the N-glycosidic bond in the beta-(deoxy)ribonucleoside molecules, with the formation of the corresponding free purine bases and pentose-1-phosphate. This Streptococcus pneumoniae serotype 2 (strain D39 / NCTC 7466) protein is Purine nucleoside phosphorylase DeoD-type.